Consider the following 121-residue polypeptide: Ribosome-binding factor A (121 aa).

It belongs to the RbfA family. As to quaternary structure, monomer. Binds 30S ribosomal subunits, but not 50S ribosomal subunits or 70S ribosomes.

The protein localises to the cytoplasm. One of several proteins that assist in the late maturation steps of the functional core of the 30S ribosomal subunit. Associates with free 30S ribosomal subunits (but not with 30S subunits that are part of 70S ribosomes or polysomes). Required for efficient processing of 16S rRNA. May interact with the 5'-terminal helix region of 16S rRNA. The sequence is that of Ribosome-binding factor A from Oenococcus oeni (strain ATCC BAA-331 / PSU-1).